The sequence spans 542 residues: Probable cysteine proteinase 361L (542 aa).

Active-site residues include Cys172, His382, and Asn414. A helical transmembrane segment spans residues 520-540 (TNNWYIYALIIIFILIIFFVL).

This sequence belongs to the peptidase C1 family.

The protein localises to the membrane. Functionally, probable cysteine protease. This is Probable cysteine proteinase 361L from Acheta domesticus (House cricket).